A 115-amino-acid chain; its full sequence is Large ribosomal subunit protein bL19 (115 aa).

It belongs to the bacterial ribosomal protein bL19 family.

Its function is as follows. This protein is located at the 30S-50S ribosomal subunit interface and may play a role in the structure and function of the aminoacyl-tRNA binding site. This is Large ribosomal subunit protein bL19 from Thermosipho africanus (strain TCF52B).